The primary structure comprises 309 residues: Porphobilinogen deaminase (309 aa).

C241 is modified (S-(dipyrrolylmethanemethyl)cysteine).

This sequence belongs to the HMBS family. As to quaternary structure, monomer. Requires dipyrromethane as cofactor.

It carries out the reaction 4 porphobilinogen + H2O = hydroxymethylbilane + 4 NH4(+). Its pathway is porphyrin-containing compound metabolism; protoporphyrin-IX biosynthesis; coproporphyrinogen-III from 5-aminolevulinate: step 2/4. In terms of biological role, tetrapolymerization of the monopyrrole PBG into the hydroxymethylbilane pre-uroporphyrinogen in several discrete steps. This is Porphobilinogen deaminase from Bacillus cereus (strain AH820).